The following is a 666-amino-acid chain: Putative L-type lectin-domain containing receptor kinase V.1 (666 aa).

The N-terminal stretch at 1–18 (MVLLLFLVLFFVPESVVC) is a signal peptide. Residues 19-289 (QRPNPNGVEF…WIQSPNGILT (271 aa)) are Extracellular-facing. Residues 27 to 257 (EFNTSGNMYT…SHYILGWTFK (231 aa)) are legume-lectin like. Asn-29, Asn-74, Asn-123, Asn-176, Asn-204, and Asn-259 each carry an N-linked (GlcNAc...) asparagine glycan. The helical transmembrane segment at 290–310 (ISLTVSGVIILIILSLSLWLF) threads the bilayer. Topologically, residues 311 to 666 (LKRKKLLEVL…FTESFVSHGR (356 aa)) are cytoplasmic. In terms of domain architecture, Protein kinase spans 344–625 (FKDTEVLGKG…SVAQLPHNLL (282 aa)). ATP-binding positions include 350-358 (LGKGGFGKV) and Lys-373. Asp-469 (proton acceptor) is an active-site residue.

The protein in the C-terminal section; belongs to the protein kinase superfamily. Ser/Thr protein kinase family. It in the N-terminal section; belongs to the leguminous lectin family.

It localises to the cell membrane. The enzyme catalyses L-seryl-[protein] + ATP = O-phospho-L-seryl-[protein] + ADP + H(+). It carries out the reaction L-threonyl-[protein] + ATP = O-phospho-L-threonyl-[protein] + ADP + H(+). This is Putative L-type lectin-domain containing receptor kinase V.1 (LECRK51) from Arabidopsis thaliana (Mouse-ear cress).